The chain runs to 415 residues: Gamma-glutamyl phosphate reductase (415 aa).

Belongs to the gamma-glutamyl phosphate reductase family.

The protein localises to the cytoplasm. It catalyses the reaction L-glutamate 5-semialdehyde + phosphate + NADP(+) = L-glutamyl 5-phosphate + NADPH + H(+). It functions in the pathway amino-acid biosynthesis; L-proline biosynthesis; L-glutamate 5-semialdehyde from L-glutamate: step 2/2. Its function is as follows. Catalyzes the NADPH-dependent reduction of L-glutamate 5-phosphate into L-glutamate 5-semialdehyde and phosphate. The product spontaneously undergoes cyclization to form 1-pyrroline-5-carboxylate. The protein is Gamma-glutamyl phosphate reductase of Bacillus cereus (strain B4264).